A 341-amino-acid polypeptide reads, in one-letter code: tRNA N6-adenosine threonylcarbamoyltransferase (341 aa).

The Fe cation site is built by H115 and H119. Residues 137–141 (IVSGG), D170, G183, D187, and N276 contribute to the substrate site. D304 is a Fe cation binding site.

The protein belongs to the KAE1 / TsaD family. Fe(2+) is required as a cofactor.

Its subcellular location is the cytoplasm. It carries out the reaction L-threonylcarbamoyladenylate + adenosine(37) in tRNA = N(6)-L-threonylcarbamoyladenosine(37) in tRNA + AMP + H(+). Required for the formation of a threonylcarbamoyl group on adenosine at position 37 (t(6)A37) in tRNAs that read codons beginning with adenine. Is involved in the transfer of the threonylcarbamoyl moiety of threonylcarbamoyl-AMP (TC-AMP) to the N6 group of A37, together with TsaE and TsaB. TsaD likely plays a direct catalytic role in this reaction. The sequence is that of tRNA N6-adenosine threonylcarbamoyltransferase from Staphylococcus aureus (strain JH1).